The following is a 224-amino-acid chain: Phosphoglycolate phosphatase (224 aa).

The active-site Nucleophile is aspartate 10. Positions 10, 12, and 176 each coordinate Mg(2+).

It belongs to the HAD-like hydrolase superfamily. CbbY/CbbZ/Gph/YieH family. Mg(2+) is required as a cofactor.

The enzyme catalyses 2-phosphoglycolate + H2O = glycolate + phosphate. It functions in the pathway organic acid metabolism; glycolate biosynthesis; glycolate from 2-phosphoglycolate: step 1/1. Functionally, specifically catalyzes the dephosphorylation of 2-phosphoglycolate. Is involved in the dissimilation of the intracellular 2-phosphoglycolate formed during the DNA repair of 3'-phosphoglycolate ends, a major class of DNA lesions induced by oxidative stress. This Pasteurella multocida (strain Pm70) protein is Phosphoglycolate phosphatase.